The following is a 216-amino-acid chain: Protein ORM2 (216 aa).

Residues 1-50 (MIDRTKNESPAFEESPLTPNVSNLKPFPSQSNKISTPVTDHRRRRSSSVI) form a disordered region. Residues 1-78 (MIDRTKNESP…NMNATWVDQR (78 aa)) are Cytoplasmic-facing. A phosphoserine mark is found at serine 9 and serine 15. Residues 17 to 38 (LTPNVSNLKPFPSQSNKISTPV) show a composition bias toward polar residues. Threonine 18 is subject to Phosphothreonine. 3 positions are modified to phosphoserine: serine 22, serine 29, and serine 51. A helical membrane pass occupies residues 79–99 (GAWLIHIVVIVLLRLFYSLFG). Topologically, residues 100-103 (STPK) are extracellular. A helical transmembrane segment spans residues 104–124 (WTWTLTNMTYIIGFYIMFHLV). Residues 125-148 (KGTPFDFNGGAYDNLTMWEQINDE) lie on the Cytoplasmic side of the membrane. A helical membrane pass occupies residues 149–169 (TLYTPTRKFLLIVPIVLFLIS). The Extracellular portion of the chain corresponds to 170 to 177 (NQYYRNDM). A helical membrane pass occupies residues 178–198 (TLFLSNLAVTVLIGVVPKLGI). The Cytoplasmic segment spans residues 199–216 (THRLRISIPGITGRAQIS).

Belongs to the ORM family. In terms of assembly, component of the SPOTS complex, at least composed of LCB1/2 (LCB1 and/or LCB2), ORM1/2 (ORM1 and/or ORM2), SAC1 and TSC3. Phosphorylated in case of disruption of sphingolipid synthesis. Phosphorylation regulates the inhibitory activity of serine palmitoyltransferases (LCB1 and LCB2).

Its subcellular location is the endoplasmic reticulum membrane. In terms of biological role, component of the SPOTS complex that acts as a negative regulator of sphingolipid synthesis. Acts by inhibiting serine palmitoyltransferases (LCB1 and LCB2) activity. Along with ORM1, plays a role in the phosphorylation of LAC1 and YPK1, the distribution of actin patches between mother and daughter cells, and in endocytosis. In Saccharomyces cerevisiae (strain ATCC 204508 / S288c) (Baker's yeast), this protein is Protein ORM2 (ORM2).